Here is a 175-residue protein sequence, read N- to C-terminus: Alkyl hydroperoxide reductase AhpD (175 aa).

Cysteine 131 acts as the Proton donor in catalysis. An intrachain disulfide couples cysteine 131 to cysteine 134. Cysteine 134 functions as the Cysteine sulfenic acid (-SOH) intermediate in the catalytic mechanism.

It belongs to the AhpD family.

It carries out the reaction N(6)-[(R)-dihydrolipoyl]-L-lysyl-[lipoyl-carrier protein] + a hydroperoxide = N(6)-[(R)-lipoyl]-L-lysyl-[lipoyl-carrier protein] + an alcohol + H2O. Its function is as follows. Antioxidant protein with alkyl hydroperoxidase activity. Required for the reduction of the AhpC active site cysteine residues and for the regeneration of the AhpC enzyme activity. The sequence is that of Alkyl hydroperoxide reductase AhpD from Brucella melitensis biotype 1 (strain ATCC 23456 / CCUG 17765 / NCTC 10094 / 16M).